The following is a 332-amino-acid chain: L-lactate dehydrogenase A chain (332 aa).

Ala2 carries the N-acetylalanine modification. Lys5 is modified (N6-acetyllysine; alternate). Lys5 carries the post-translational modification N6-succinyllysine; alternate. Lys14 carries the post-translational modification N6-acetyllysine. Position 29 to 57 (29 to 57 (GAVGMACAISILMKELADEIALVDVMEDK)) interacts with NAD(+). Lys57 is subject to N6-acetyllysine; alternate. Lys57 participates in a covalent cross-link: Glycyl lysine isopeptide (Lys-Gly) (interchain with G-Cter in SUMO2); alternate. Residue Lys81 is modified to N6-acetyllysine. Arg99 contacts NAD(+). Arg106 serves as a coordination point for substrate. The residue at position 118 (Lys118) is an N6-acetyllysine; alternate. Lys118 is subject to N6-succinyllysine; alternate. Lys126 bears the N6-acetyllysine mark. Asn138 is a binding site for NAD(+). Residues Asn138 and Arg169 each contribute to the substrate site. The active-site Proton acceptor is the His193. Residues Lys224 and Lys232 each carry the N6-acetyllysine modification. Tyr239 carries the phosphotyrosine modification. An N6-acetyllysine modification is found at Lys243. Residue Thr248 coordinates substrate. A Phosphothreonine modification is found at Thr309. Lys318 carries the post-translational modification N6-acetyllysine; alternate. Lys318 carries the N6-succinyllysine; alternate modification. Thr322 carries the post-translational modification Phosphothreonine.

Belongs to the LDH/MDH superfamily. LDH family. As to quaternary structure, homotetramer. Interacts with PTEN upstream reading frame protein MP31. Post-translationally, ISGylated.

The protein localises to the cytoplasm. It carries out the reaction (S)-lactate + NAD(+) = pyruvate + NADH + H(+). Its pathway is fermentation; pyruvate fermentation to lactate; (S)-lactate from pyruvate: step 1/1. Interconverts simultaneously and stereospecifically pyruvate and lactate with concomitant interconversion of NADH and NAD(+). This is L-lactate dehydrogenase A chain (LDHA) from Sus scrofa (Pig).